The sequence spans 476 residues: Aspartyl/glutamyl-tRNA(Asn/Gln) amidotransferase subunit B (476 aa).

It belongs to the GatB/GatE family. GatB subfamily. In terms of assembly, heterotrimer of A, B and C subunits.

The enzyme catalyses L-glutamyl-tRNA(Gln) + L-glutamine + ATP + H2O = L-glutaminyl-tRNA(Gln) + L-glutamate + ADP + phosphate + H(+). It catalyses the reaction L-aspartyl-tRNA(Asn) + L-glutamine + ATP + H2O = L-asparaginyl-tRNA(Asn) + L-glutamate + ADP + phosphate + 2 H(+). Allows the formation of correctly charged Asn-tRNA(Asn) or Gln-tRNA(Gln) through the transamidation of misacylated Asp-tRNA(Asn) or Glu-tRNA(Gln) in organisms which lack either or both of asparaginyl-tRNA or glutaminyl-tRNA synthetases. The reaction takes place in the presence of glutamine and ATP through an activated phospho-Asp-tRNA(Asn) or phospho-Glu-tRNA(Gln). This is Aspartyl/glutamyl-tRNA(Asn/Gln) amidotransferase subunit B from Laribacter hongkongensis (strain HLHK9).